Here is a 181-residue protein sequence, read N- to C-terminus: MTDKRNNLIWIDLEMTGLSPENDRIIEIATIVTDAELNVLAEGPVLAVHQSDALLDGMDEWNTTHHNNSGLVARVKASTVNDAAAESQTIAFLEQYVEAGMSPMCGNSICQDRRFLANYMPKLEAFFHYRNLDVSTLKELARRWKPDILPGFSKENKHLALDDIRESIAELVYYREHFIDA.

The 164-residue stretch at 8 to 171 folds into the Exonuclease domain; it reads LIWIDLEMTG…DDIRESIAEL (164 aa). Tyr129 is a catalytic residue.

Belongs to the oligoribonuclease family.

It localises to the cytoplasm. Its function is as follows. 3'-to-5' exoribonuclease specific for small oligoribonucleotides. This chain is Oligoribonuclease, found in Alcanivorax borkumensis (strain ATCC 700651 / DSM 11573 / NCIMB 13689 / SK2).